A 73-amino-acid polypeptide reads, in one-letter code: Translation initiation factor IF-1 (73 aa).

The S1-like domain maps to 1 to 73 (MANKEELIEF…TKGRITYRAR (73 aa)).

It belongs to the IF-1 family. In terms of assembly, component of the 30S ribosomal translation pre-initiation complex which assembles on the 30S ribosome in the order IF-2 and IF-3, IF-1 and N-formylmethionyl-tRNA(fMet); mRNA recruitment can occur at any time during PIC assembly.

Its subcellular location is the cytoplasm. In terms of biological role, one of the essential components for the initiation of protein synthesis. Stabilizes the binding of IF-2 and IF-3 on the 30S subunit to which N-formylmethionyl-tRNA(fMet) subsequently binds. Helps modulate mRNA selection, yielding the 30S pre-initiation complex (PIC). Upon addition of the 50S ribosomal subunit IF-1, IF-2 and IF-3 are released leaving the mature 70S translation initiation complex. The protein is Translation initiation factor IF-1 of Acinetobacter baumannii (strain ATCC 17978 / DSM 105126 / CIP 53.77 / LMG 1025 / NCDC KC755 / 5377).